The primary structure comprises 502 residues: Probable cytosol aminopeptidase (502 aa).

2 residues coordinate Mn(2+): Lys-269 and Asp-274. The active site involves Lys-281. Positions 292, 351, and 353 each coordinate Mn(2+). Arg-355 is an active-site residue.

It belongs to the peptidase M17 family. Mn(2+) is required as a cofactor.

The protein resides in the cytoplasm. The catalysed reaction is Release of an N-terminal amino acid, Xaa-|-Yaa-, in which Xaa is preferably Leu, but may be other amino acids including Pro although not Arg or Lys, and Yaa may be Pro. Amino acid amides and methyl esters are also readily hydrolyzed, but rates on arylamides are exceedingly low.. It catalyses the reaction Release of an N-terminal amino acid, preferentially leucine, but not glutamic or aspartic acids.. In terms of biological role, presumably involved in the processing and regular turnover of intracellular proteins. Catalyzes the removal of unsubstituted N-terminal amino acids from various peptides. The polypeptide is Probable cytosol aminopeptidase (Vibrio campbellii (strain ATCC BAA-1116)).